The chain runs to 339 residues: Lipoyl synthase (339 aa).

The interval 13 to 35 (RPKLDAPARPRHPEKAHRPDTAI) is disordered. Positions 68, 73, 79, 94, 98, 101, and 307 each coordinate [4Fe-4S] cluster. The Radical SAM core domain occupies 80–296 (WEKRHATFMI…ETTAYAKGFL (217 aa)).

This sequence belongs to the radical SAM superfamily. Lipoyl synthase family. [4Fe-4S] cluster is required as a cofactor.

The protein resides in the cytoplasm. The enzyme catalyses [[Fe-S] cluster scaffold protein carrying a second [4Fe-4S](2+) cluster] + N(6)-octanoyl-L-lysyl-[protein] + 2 oxidized [2Fe-2S]-[ferredoxin] + 2 S-adenosyl-L-methionine + 4 H(+) = [[Fe-S] cluster scaffold protein] + N(6)-[(R)-dihydrolipoyl]-L-lysyl-[protein] + 4 Fe(3+) + 2 hydrogen sulfide + 2 5'-deoxyadenosine + 2 L-methionine + 2 reduced [2Fe-2S]-[ferredoxin]. It participates in protein modification; protein lipoylation via endogenous pathway; protein N(6)-(lipoyl)lysine from octanoyl-[acyl-carrier-protein]: step 2/2. Catalyzes the radical-mediated insertion of two sulfur atoms into the C-6 and C-8 positions of the octanoyl moiety bound to the lipoyl domains of lipoate-dependent enzymes, thereby converting the octanoylated domains into lipoylated derivatives. The chain is Lipoyl synthase from Methylorubrum extorquens (strain PA1) (Methylobacterium extorquens).